Here is a 308-residue protein sequence, read N- to C-terminus: Aldo-keto reductase AKR2E4 (308 aa).

Residues 22-29 (GTGRGTAK) and D53 each bind NADP(+). Y58 (proton donor) is an active-site residue. Residues 158–159 (SN), R215, and 259–269 (KSTNKQRIAQN) contribute to the NADP(+) site.

Belongs to the short-chain dehydrogenases/reductases (SDR) family. In terms of tissue distribution, detected in hemolymph (at protein level). Detected in larval ovary.

With respect to regulation, subject to substrate inhibition by high levels of 3-dehydroecdysone. In terms of biological role, NADP-dependent oxidoreductase with high 3-dehydroecdysone reductase activity. May play a role in the regulation of molting. Has lower activity with phenylglyoxal and isatin (in vitro). Has no activity with NADH as cosubstrate. Has no activity with nitrobenzaldehyde and 3-hydroxybenzaldehyde. This Bombyx mori (Silk moth) protein is Aldo-keto reductase AKR2E4 (akr2e).